We begin with the raw amino-acid sequence, 344 residues long: tRNA N6-adenosine threonylcarbamoyltransferase (344 aa).

Fe cation contacts are provided by His-119 and His-123. Substrate-binding positions include Val-141 to Gly-145, Asp-174, Gly-187, Asp-191, and Asn-280. Asp-310 lines the Fe cation pocket.

The protein belongs to the KAE1 / TsaD family. The cofactor is Fe(2+).

The protein resides in the cytoplasm. The catalysed reaction is L-threonylcarbamoyladenylate + adenosine(37) in tRNA = N(6)-L-threonylcarbamoyladenosine(37) in tRNA + AMP + H(+). In terms of biological role, required for the formation of a threonylcarbamoyl group on adenosine at position 37 (t(6)A37) in tRNAs that read codons beginning with adenine. Is involved in the transfer of the threonylcarbamoyl moiety of threonylcarbamoyl-AMP (TC-AMP) to the N6 group of A37, together with TsaE and TsaB. TsaD likely plays a direct catalytic role in this reaction. This Listeria monocytogenes serovar 1/2a (strain ATCC BAA-679 / EGD-e) protein is tRNA N6-adenosine threonylcarbamoyltransferase.